Here is a 988-residue protein sequence, read N- to C-terminus: Transposase for transposon Tn21 (988 aa).

The interval 672-696 (GDGTTSSSDEQNFRTASKAKSTGHI) is disordered. The span at 674 to 695 (GTTSSSDEQNFRTASKAKSTGH) shows a compositional bias: polar residues.

The protein belongs to the transposase 7 family.

Its function is as follows. Required for transposition of transposon Tn21. This chain is Transposase for transposon Tn21 (tnpA), found in Escherichia coli.